A 268-amino-acid polypeptide reads, in one-letter code: Riboflavin transport system permease protein RibX (268 aa).

A run of 6 helical transmembrane segments spans residues 24-44 (ALGLPVTLMLLLVFWQAGVTL), 76-96 (LATLSAALGGFTLALIIALIL), 119-139 (AIPVVAVAPLIILWFGAGLTS), 140-160 (KVLVAALITFLPILINTVVAI), 185-205 (VEAPLALPVLFGGVRTGLALA), and 236-256 (LIFVALATLALITLTLYVLAG). The ABC transmembrane type-1 domain occupies 75–255 (TLATLSAALG…LITLTLYVLA (181 aa)).

This sequence belongs to the binding-protein-dependent transport system permease family. As to quaternary structure, the complex is likely composed of an ATP-binding protein, a transmembrane protein (RibX) and a solute-binding protein (RibY).

It localises to the cell membrane. Its function is as follows. Part of an ABC transporter complex that transports riboflavin into the cell. The sequence is that of Riboflavin transport system permease protein RibX from Chloroflexus aurantiacus (strain ATCC 29366 / DSM 635 / J-10-fl).